The sequence spans 395 residues: Elongation factor Tu (395 aa).

Positions 6-205 (KPHINVGTIG…NALEKISLPT (200 aa)) constitute a tr-type G domain. The segment at 15–22 (GHVDHGKT) is G1. Position 15-22 (15-22 (GHVDHGKT)) interacts with GTP. T22 lines the Mg(2+) pocket. The segment at 59-63 (GITIS) is G2. The segment at 80 to 83 (DCPG) is G3. Residues 80-84 (DCPGH) and 135-138 (NKCD) each bind GTP. A G4 region spans residues 135 to 138 (NKCD). The segment at 173–175 (SAV) is G5.

This sequence belongs to the TRAFAC class translation factor GTPase superfamily. Classic translation factor GTPase family. EF-Tu/EF-1A subfamily. Monomer.

It is found in the cytoplasm. It catalyses the reaction GTP + H2O = GDP + phosphate + H(+). GTP hydrolase that promotes the GTP-dependent binding of aminoacyl-tRNA to the A-site of ribosomes during protein biosynthesis. This Ehrlichia chaffeensis (strain ATCC CRL-10679 / Arkansas) protein is Elongation factor Tu.